The chain runs to 231 residues: MILLKLYLTLAAILCQSRGMTSLDLDDLMTTNPEIQNEIINKHNDLRRTVDPPAKNMLKMSWDNIIAESAKRAALRCNYKEHTSIAERTIGGVVCGENYFMSSNPRTWSSSIQSWFDERNNFMFGFGPTIPGVMVGHYTQVVWYKSYKVGCAINLCPAQSLKYFQVCQYCPGGNVAGRKYEPYTIGEPCAARPKDCDNGLCTNPCAYNDDYTSCPDLTKQVGCHHPVTANC.

A signal peptide spans 1-19; the sequence is MILLKLYLTLAAILCQSRG. The SCP domain occupies 41–169; sequence NKHNDLRRTV…SLKYFQVCQY (129 aa). 5 disulfide bridges follow: Cys77–Cys156, Cys95–Cys170, Cys151–Cys167, Cys189–Cys196, and Cys214–Cys231. Residues 205 to 231 enclose the ShKT domain; that stretch reads CAYNDDYTSCPDLTKQVGCHHPVTANC.

Belongs to the CRISP family. In terms of processing, contains 8 disulfide bonds. Expressed by the venom gland.

It localises to the secreted. Its function is as follows. Blocks ryanodine receptors, and potassium channels. The polypeptide is Cysteine-rich venom protein VAR10 (Varanus varius (Lace monitor lizard)).